Here is a 248-residue protein sequence, read N- to C-terminus: Anamorsin homolog (248 aa).

The tract at residues 4 to 130 (FKGLQKSLYI…ETGSSARLSF (127 aa)) is N-terminal SAM-like domain. The tract at residues 131 to 161 (AKKSPSMNVWKISGDDEELIDEEELLDEEDK) is linker. Cys172, Cys181, Cys184, and Cys186 together coordinate [2Fe-2S] cluster. The interval 172–186 (CSTTGKRKACKNCSC) is fe-S binding site A. Positions 209, 212, 220, and 223 each coordinate [4Fe-4S] cluster. 2 short sequence motifs (cx2C motif) span residues 209–212 (CGNC) and 220–223 (CSTC). The interval 209-223 (CGNCYLGDAFRCSTC) is fe-S binding site B.

It belongs to the anamorsin family. As to quaternary structure, monomer. It depends on [2Fe-2S] cluster as a cofactor. [4Fe-4S] cluster serves as cofactor.

Its subcellular location is the cytoplasm. It localises to the mitochondrion intermembrane space. In terms of biological role, component of the cytosolic iron-sulfur (Fe-S) protein assembly (CIA) machinery. Required for the maturation of extramitochondrial Fe-S proteins. Part of an electron transfer chain functioning in an early step of cytosolic Fe-S biogenesis, facilitating the de novo assembly of a [4Fe-4S] cluster on the cytosolic Fe-S scaffold complex. Electrons are transferred from NADPH via a FAD- and FMN-containing diflavin oxidoreductase. Together with the diflavin oxidoreductase, also required for the assembly of the diferric tyrosyl radical cofactor of ribonucleotide reductase (RNR), probably by providing electrons for reduction during radical cofactor maturation in the catalytic small subunit. In Drosophila mojavensis (Fruit fly), this protein is Anamorsin homolog.